We begin with the raw amino-acid sequence, 346 residues long: Aspartate-semialdehyde dehydrogenase (346 aa).

Residues Ser12 to Val15 and Arg40 to Ser41 each bind NADP(+). Arg101 is a binding site for phosphate. The active-site Acyl-thioester intermediate is Cys131. Gln158 provides a ligand contact to substrate. Ser161–Gly162 contributes to the NADP(+) binding site. Lys225 contacts phosphate. Substrate is bound at residue Arg246. The active-site Proton acceptor is His253. Residue Gln326 participates in NADP(+) binding.

This sequence belongs to the aspartate-semialdehyde dehydrogenase family. Homodimer.

The catalysed reaction is L-aspartate 4-semialdehyde + phosphate + NADP(+) = 4-phospho-L-aspartate + NADPH + H(+). It participates in amino-acid biosynthesis; L-lysine biosynthesis via DAP pathway; (S)-tetrahydrodipicolinate from L-aspartate: step 2/4. Its pathway is amino-acid biosynthesis; L-methionine biosynthesis via de novo pathway; L-homoserine from L-aspartate: step 2/3. The protein operates within amino-acid biosynthesis; L-threonine biosynthesis; L-threonine from L-aspartate: step 2/5. Catalyzes the NADPH-dependent formation of L-aspartate-semialdehyde (L-ASA) by the reductive dephosphorylation of L-aspartyl-4-phosphate. In Helicobacter pylori (strain ATCC 700392 / 26695) (Campylobacter pylori), this protein is Aspartate-semialdehyde dehydrogenase.